Here is a 482-residue protein sequence, read N- to C-terminus: Glutamate--tRNA ligase (482 aa).

The 'HIGH' region signature appears at 10 to 20; that stretch reads PSPTGFLHIGN. The 'KMSKS' region motif lies at 253–257; it reads KLSKR. Lys256 lines the ATP pocket.

The protein belongs to the class-I aminoacyl-tRNA synthetase family. Glutamate--tRNA ligase type 1 subfamily. Monomer.

It is found in the cytoplasm. The enzyme catalyses tRNA(Glu) + L-glutamate + ATP = L-glutamyl-tRNA(Glu) + AMP + diphosphate. Catalyzes the attachment of glutamate to tRNA(Glu) in a two-step reaction: glutamate is first activated by ATP to form Glu-AMP and then transferred to the acceptor end of tRNA(Glu). The chain is Glutamate--tRNA ligase from Mesoplasma florum (strain ATCC 33453 / NBRC 100688 / NCTC 11704 / L1) (Acholeplasma florum).